A 445-amino-acid chain; its full sequence is 3-phosphoshikimate 1-carboxyvinyltransferase (445 aa).

The disordered stretch occupies residues 1–20 (MSTSAAPTPLESRASGPLSG). Residues K28, S29, and R33 each contribute to the 3-phosphoshikimate site. A phosphoenolpyruvate-binding site is contributed by K28. Phosphoenolpyruvate-binding residues include G101 and R129. 4 residues coordinate 3-phosphoshikimate: S175, Q177, D328, and K355. A phosphoenolpyruvate-binding site is contributed by Q177. Residue D328 is the Proton acceptor of the active site. R359 and R402 together coordinate phosphoenolpyruvate.

This sequence belongs to the EPSP synthase family. In terms of assembly, monomer.

The protein resides in the cytoplasm. It carries out the reaction 3-phosphoshikimate + phosphoenolpyruvate = 5-O-(1-carboxyvinyl)-3-phosphoshikimate + phosphate. It participates in metabolic intermediate biosynthesis; chorismate biosynthesis; chorismate from D-erythrose 4-phosphate and phosphoenolpyruvate: step 6/7. Functionally, catalyzes the transfer of the enolpyruvyl moiety of phosphoenolpyruvate (PEP) to the 5-hydroxyl of shikimate-3-phosphate (S3P) to produce enolpyruvyl shikimate-3-phosphate and inorganic phosphate. In Bradyrhizobium sp. (strain ORS 278), this protein is 3-phosphoshikimate 1-carboxyvinyltransferase.